A 197-amino-acid polypeptide reads, in one-letter code: ATP-dependent Clp protease proteolytic subunit 3 (197 aa).

Serine 96 (nucleophile) is an active-site residue. Histidine 121 is an active-site residue.

This sequence belongs to the peptidase S14 family. Fourteen ClpP subunits assemble into 2 heptameric rings which stack back to back to give a disk-like structure with a central cavity, resembling the structure of eukaryotic proteasomes.

The protein localises to the cytoplasm. The enzyme catalyses Hydrolysis of proteins to small peptides in the presence of ATP and magnesium. alpha-casein is the usual test substrate. In the absence of ATP, only oligopeptides shorter than five residues are hydrolyzed (such as succinyl-Leu-Tyr-|-NHMec, and Leu-Tyr-Leu-|-Tyr-Trp, in which cleavage of the -Tyr-|-Leu- and -Tyr-|-Trp bonds also occurs).. Cleaves peptides in various proteins in a process that requires ATP hydrolysis. Has a chymotrypsin-like activity. Plays a major role in the degradation of misfolded proteins. The chain is ATP-dependent Clp protease proteolytic subunit 3 from Prochlorococcus marinus (strain MIT 9313).